The chain runs to 89 residues: Acyl-CoA-binding protein (89 aa).

The ACB domain occupies 3–88; sequence LKEEFEEHAE…VKQLFEAAGS (86 aa). An acyl-CoA is bound by residues 30-34, Lys-56, and Tyr-75; that span reads YGLYK.

The protein belongs to the ACBP family.

Its function is as follows. Binds medium- and long-chain acyl-CoA esters with very high affinity and may function as an intracellular carrier of acyl-CoA esters. In Gossypium hirsutum (Upland cotton), this protein is Acyl-CoA-binding protein.